A 35-amino-acid polypeptide reads, in one-letter code: U1-theraphotoxin-Hs1f (35 aa).

3 cysteine pairs are disulfide-bonded: Cys3–Cys16, Cys7–Cys27, and Cys21–Cys32.

It belongs to the neurotoxin 12 (Hwtx-2) family. 02 (Hwtx-2) subfamily. Expressed by the venom gland.

The protein localises to the secreted. Its function is as follows. Blocks neuromuscular transmission. Acts cooperatively to potentiate the activity of huwentoxin-I. Paralyzes locusts and kills mice following intracerebroventricular injection. The chain is U1-theraphotoxin-Hs1f from Cyriopagopus schmidti (Chinese bird spider).